Reading from the N-terminus, the 261-residue chain is Triosephosphate isomerase (261 aa).

A substrate-binding site is contributed by 10–12 (NWK). The active-site Electrophile is the His100. Glu172 (proton acceptor) is an active-site residue. Residues Gly178, Ser218, and 239 to 240 (GG) each bind substrate.

Belongs to the triosephosphate isomerase family. In terms of assembly, homodimer.

It is found in the cytoplasm. The enzyme catalyses D-glyceraldehyde 3-phosphate = dihydroxyacetone phosphate. The protein operates within carbohydrate biosynthesis; gluconeogenesis. It functions in the pathway carbohydrate degradation; glycolysis; D-glyceraldehyde 3-phosphate from glycerone phosphate: step 1/1. Functionally, involved in the gluconeogenesis. Catalyzes stereospecifically the conversion of dihydroxyacetone phosphate (DHAP) to D-glyceraldehyde-3-phosphate (G3P). The chain is Triosephosphate isomerase from Mycobacterium sp. (strain JLS).